Reading from the N-terminus, the 343-residue chain is N-malonyltransferase FDB2 (343 aa).

The active-site Acyl-thioester intermediate is Cys107. Residue His155 is the Proton acceptor of the active site. The active site involves Asp170.

Belongs to the arylamine N-acetyltransferase family.

The protein operates within xenobiotic degradation. N-malonyltransferase; part of the Fusarium detoxification of benzoxazolinone cluster involved in the degradation of benzoxazolinones produced by the host plant. Maize, wheat, and rye produce the 2 benzoxazinone phytoanticipins 2,4-dihy-droxy-7-methoxy-1,4-benzoxazin-3-one (DIMBOA) and 2,4-dihydroxy-1,4-benzoxazin-3-one (DIBOA) that, due to their inherent instability once released, spontaneously degrade to the more stable corresponding benzoxazolinones, 6-methoxy-2-benzoxazolinone (MBOA) and 2-benzoxazolinone (BOA), respectively. The first step in the detoxification of benzoxazolinones involves the hydrolysis of the cyclic ester bond of benzoxazolinones by the gamma-lactamase FDB1 to aminophenols. FDB1 is able to convert BOA into 2-aminophenol (2-AP), as well as MBOA into 5-methoxy-2-aminophenol (2-AMP). The N-malonyltransferase FDB2 then metabolizes aminophenols via N-malonylation to non-toxic malonamic acids. FDB2 converts 2-AP into N-(2-hydroxyphenyl) malonamic acid (HPMA) and 2-AMP into N-(2-hydroxy-4-methoxyphenyl) malonamic acid (HMPMA). The cluster also contains 2 transcription factors (FDB3 and FPSE_08121), an aldo-keto reductase (FPSE_08125) that possibly associates with a ketone component of BOA and MBOA degradation, an esterase (FPSE_08126), an acyl-CoA transferase (FPSE_08120), a solute carrier protein (FPSE_08119) and a transmembrane transporter (FPSE_08127) proposed to shuttle metabolites of benzoxazolinone degradation. The protein is N-malonyltransferase FDB2 of Fusarium pseudograminearum (strain CS3096) (Wheat and barley crown-rot fungus).